We begin with the raw amino-acid sequence, 258 residues long: MTQIGQYIKLNDAVPNLILHITTKLLRNENLTSFKQEELLLIQHVCTSMLSHGIKILLLRESLYNSGIGDIVILNRKISNNYWFRIFSILKQHSDAELLRHMFNESHSAYISKKLHYSGNVSHMINFLFMDEFGVNLKIPEELICEGNIVFSVGAIYNHRLLKICRFFNRFWGDQEREPTVRLICKHLWFAYLIMFGKFEISTLAYSQQRAEHKAGLFSFLQNDFKVFCGMSENPQLLDSSAIFDLTGISAEDLFSYE.

The protein belongs to the herpesviridae UL79 family.

This chain is Protein U52 (U52), found in Human herpesvirus 6A (strain Uganda-1102) (HHV-6 variant A).